The chain runs to 503 residues: ATP synthase subunit alpha (503 aa).

Residue 169–176 participates in ATP binding; the sequence is GDRSTGKT.

This sequence belongs to the ATPase alpha/beta chains family. F-type ATPases have 2 components, CF(1) - the catalytic core - and CF(0) - the membrane proton channel. CF(1) has five subunits: alpha(3), beta(3), gamma(1), delta(1), epsilon(1). CF(0) has three main subunits: a(1), b(2) and c(9-12). The alpha and beta chains form an alternating ring which encloses part of the gamma chain. CF(1) is attached to CF(0) by a central stalk formed by the gamma and epsilon chains, while a peripheral stalk is formed by the delta and b chains.

Its subcellular location is the cell membrane. It carries out the reaction ATP + H2O + 4 H(+)(in) = ADP + phosphate + 5 H(+)(out). In terms of biological role, produces ATP from ADP in the presence of a proton gradient across the membrane. The alpha chain is a regulatory subunit. The polypeptide is ATP synthase subunit alpha (Dehalococcoides mccartyi (strain ATCC BAA-2266 / KCTC 15142 / 195) (Dehalococcoides ethenogenes (strain 195))).